We begin with the raw amino-acid sequence, 262 residues long: Small ribosomal subunit protein uS2 (262 aa).

Residues 228 to 262 are disordered; it reads VSNEEVAAEQNINLDDKEESEQAETTEENTSVESN. Positions 243-254 are enriched in acidic residues; that stretch reads DKEESEQAETTE.

It belongs to the universal ribosomal protein uS2 family.

The protein is Small ribosomal subunit protein uS2 of Staphylococcus epidermidis (strain ATCC 35984 / DSM 28319 / BCRC 17069 / CCUG 31568 / BM 3577 / RP62A).